The primary structure comprises 563 residues: Probable trehalase (563 aa).

Residues arginine 154, tryptophan 161 to aspartate 162, asparagine 198, arginine 207 to glutamine 209, arginine 274 to glutamate 276, and glycine 307 contribute to the substrate site. Catalysis depends on proton donor/acceptor residues aspartate 309 and glutamate 517. A substrate-binding site is contributed by glutamate 532.

It belongs to the glycosyl hydrolase 37 family.

The catalysed reaction is alpha,alpha-trehalose + H2O = alpha-D-glucose + beta-D-glucose. In terms of biological role, involved in the regulation of trehalose content by hydrolyzing trehalose to glucose. In Oryza sativa subsp. japonica (Rice), this protein is Probable trehalase.